Here is a 151-residue protein sequence, read N- to C-terminus: Gametocyte-specific factor 1-like (151 aa).

2 consecutive CHHC U11-48K-type zinc fingers follow at residues 6–33 (IEIC…RKKN) and 40–67 (MASC…VNRS). The Zn(2+) site is built by Cys-9, His-15, His-25, Cys-29, Cys-43, His-49, His-59, and Cys-63. A disordered region spans residues 130–151 (QESRGGDQCPEDPQTRTRKANF).

This sequence belongs to the UPF0224 (FAM112) family.

This is Gametocyte-specific factor 1-like (Gtsf1l) from Mus musculus (Mouse).